A 70-amino-acid chain; its full sequence is MSLIAAAIAIGLGALGAGIGNGLIVSRTVEGIARQPEAGKELRTLMFIGVALVEALPIIAVVIAFLAFFS.

Transmembrane regions (helical) follow at residues 4-24 and 45-65; these read IAAAIAIGLGALGAGIGNGLI and LMFIGVALVEALPIIAVVIAF.

The protein belongs to the ATPase C chain family. F-type ATPases have 2 components, F(1) - the catalytic core - and F(0) - the membrane proton channel. F(1) has five subunits: alpha(3), beta(3), gamma(1), delta(1), epsilon(1). F(0) has three main subunits: a(1), b(2) and c(10-14). The alpha and beta chains form an alternating ring which encloses part of the gamma chain. F(1) is attached to F(0) by a central stalk formed by the gamma and epsilon chains, while a peripheral stalk is formed by the delta and b chains.

It is found in the cell membrane. Functionally, f(1)F(0) ATP synthase produces ATP from ADP in the presence of a proton or sodium gradient. F-type ATPases consist of two structural domains, F(1) containing the extramembraneous catalytic core and F(0) containing the membrane proton channel, linked together by a central stalk and a peripheral stalk. During catalysis, ATP synthesis in the catalytic domain of F(1) is coupled via a rotary mechanism of the central stalk subunits to proton translocation. Key component of the F(0) channel; it plays a direct role in translocation across the membrane. A homomeric c-ring of between 10-14 subunits forms the central stalk rotor element with the F(1) delta and epsilon subunits. The chain is ATP synthase subunit c from Bacillus licheniformis (strain ATCC 14580 / DSM 13 / JCM 2505 / CCUG 7422 / NBRC 12200 / NCIMB 9375 / NCTC 10341 / NRRL NRS-1264 / Gibson 46).